The following is a 166-amino-acid chain: Ribosome biogenesis regulatory protein homolog (166 aa).

2 positions are modified to phosphoserine: Ser-34 and Ser-64. Residues 144 to 166 (KEKKLTSKQVRNTSKKIKRSRRH) are disordered. A compositionally biased stretch (basic residues) spans 156 to 166 (TSKKIKRSRRH).

This sequence belongs to the RRS1 family. As to quaternary structure, component of a hexameric 5S RNP precursor complex, composed of 5S RNA, rrs1, rpf2, rpl5a/rpl5b, rpl11a/rpl11b and syo1; this complex acts as a precursor for ribosome assembly. Interacts with sad1.

The protein localises to the nucleus. Its subcellular location is the nucleolus. Its function is as follows. Involved in ribosomal large subunit assembly. The protein is Ribosome biogenesis regulatory protein homolog of Schizosaccharomyces pombe (strain 972 / ATCC 24843) (Fission yeast).